A 176-amino-acid polypeptide reads, in one-letter code: MNKDDDKEGMAMFSALIEGIKPITQDKRHFRTPLKTKQEIELKEQQLHANSYFSDTYQPLLPVQGPMRWLDEGVDSLELKRLRRGDYQPDLLLDLHGYRQSEAKLELAALIQACVKQQSQCCCVMHGYGTGILKQQVPMWLVQHPMVKAFHQAPKEWGGDAALLVLIDIGDQPHRR.

One can recognise a Smr domain in the interval 93-168 (LDLHGYRQSE…GDAALLVLID (76 aa)).

It belongs to the SmrB family. As to quaternary structure, associates with collided ribosomes, but not with correctly translating polysomes.

Its function is as follows. Acts as a ribosome collision sensor. Detects stalled/collided disomes (pairs of ribosomes where the leading ribosome is stalled and a second ribosome has collided with it) and endonucleolytically cleaves mRNA at the 5' boundary of the stalled ribosome. Stalled/collided disomes form a new interface (primarily via the 30S subunits) that binds SmrB. Cleaved mRNA becomes available for tmRNA ligation, leading to ribosomal subunit dissociation and rescue of stalled ribosomes. The polypeptide is Ribosome rescue factor SmrB (Shewanella oneidensis (strain ATCC 700550 / JCM 31522 / CIP 106686 / LMG 19005 / NCIMB 14063 / MR-1)).